A 101-amino-acid polypeptide reads, in one-letter code: DNA-binding protein Fis (101 aa).

Positions 77 to 96 (QTRAANMLGINRGTLRKKLK) form a DNA-binding region, H-T-H motif.

Belongs to the transcriptional regulatory Fis family. As to quaternary structure, homodimer.

Activates ribosomal RNA transcription. Plays a direct role in upstream activation of rRNA promoters. The chain is DNA-binding protein Fis from Shewanella halifaxensis (strain HAW-EB4).